The primary structure comprises 171 residues: Co-chaperone protein HscB (171 aa).

Positions Asp2–Leu74 constitute a J domain.

The protein belongs to the HscB family. In terms of assembly, interacts with HscA and stimulates its ATPase activity. Interacts with IscU.

In terms of biological role, co-chaperone involved in the maturation of iron-sulfur cluster-containing proteins. Seems to help targeting proteins to be folded toward HscA. The chain is Co-chaperone protein HscB from Salmonella typhimurium (strain LT2 / SGSC1412 / ATCC 700720).